The chain runs to 275 residues: MTRFTSIGLCAVLLFNVCSCATLQKDTIASMLKKGNSPRVTRQRRQLPSPCGSLQPGQLCCDSYKYNPVTHLCCNDNPAVKPASPTAIPGCCDQSAYDRNTHLCCDATLSPHPPATTLPACCGPVVYDSSVNSTQLCCAGAVLNKPVGVPRALCCGTATYNPATQVCCMGFPVPKAGGPNATSLCCGPFSYDISTQMCCNGNIALKSATHTHCCGMFSFNPATHLCCNGYPYPKLGFISPSCCGSLVYDTLTMRCCDGSHVVLITPNQDPCANLA.

Residues 1-20 form the signal peptide; the sequence is MTRFTSIGLCAVLLFNVCSC.

As to expression, component of the acid-insoluble and acid-soluble organic matrix of the aragonitic skeleton (at protein level).

The protein resides in the secreted. This chain is Galaxin-2, found in Acropora millepora (Staghorn coral).